The primary structure comprises 407 residues: Transmembrane protein 184B (407 aa).

Residues 1–28 show a composition bias toward low complexity; the sequence is MTVRGAALAPDPASPTTTTASPSVSATP. A disordered region spans residues 1–31; sequence MTVRGAALAPDPASPTTTTASPSVSATPEGS. Helical transmembrane passes span 40–60, 84–104, 121–141, 178–198, 214–234, 249–269, and 290–310; these read FLMT…ALLI, ILFI…FFTN, FVIY…SAIM, LQFC…QAFG, VTII…LFYF, FFMV…LAIL, and VAAG…ALAL. The interval 369–395 is disordered; that stretch reads TLEPGPTWRGGTHSLSRSHSLSGARDN. 3 positions are modified to phosphoserine: serine 388, serine 402, and serine 403.

The protein belongs to the TMEM184 family.

Its subcellular location is the membrane. Its function is as follows. May activate the MAP kinase signaling pathway. This Mus musculus (Mouse) protein is Transmembrane protein 184B (Tmem184b).